We begin with the raw amino-acid sequence, 569 residues long: Myotubularin-related protein 9 (569 aa).

One can recognise a Myotubularin phosphatase domain in the interval 134 to 513 (GWSAFDLEQE…QCIKIWDRLF (380 aa)).

The protein belongs to the protein-tyrosine phosphatase family. Non-receptor class myotubularin subfamily. In terms of assembly, heterodimer with lipid phosphatase mtm-6.

It localises to the cytoplasm. Its subcellular location is the membrane. May act as a regulatory subunit for mtm-6. In association with phosphatase mtm-6, plays a role in endosome trafficking probably by regulating phosphatidylinositol-3-phosphate levels. Regulates fluid phase endocytosis in coelomocytes. Regulates posterior migration of QL neuroblast descendants and the anterior migration of QR neuroblast descendants and HSN neurons during larval development probably by controlling Wnt ligand secretion through the regulation of sorting receptor mig-14 trafficking. Involved in the formation of correct synapse number in DA9 motor neurons. The chain is Myotubularin-related protein 9 from Caenorhabditis elegans.